The primary structure comprises 48 residues: MPQLIPFFFLNQLFYGYLALFALLVLVSWVILPYLLQLQIVRLLITKL.

Met1 is subject to N-formylmethionine. The Mitochondrial intermembrane portion of the chain corresponds to Met1 to Gln12. The chain crosses the membrane as a helical span at residues Leu13–Pro33. The Mitochondrial matrix segment spans residues Tyr34–Leu48.

In terms of assembly, F-type ATP synthases have 2 components, the catalytic core F(1) and the membrane-embedded component F(0), linked together by a central stalk and a peripheral stalk. The central stalk, also called rotor shaft, is often seen as part of F(1). The peripheral stalk is seen as part of F(0). F(0) contains the membrane channel next to the rotor. F-type ATP synthases form dimers but each monomer functions independently in ATP generation. The dimer consists of 18 different polypeptides: ATP1 (subunit alpha, part of F(1), 3 molecules per monomer), ATP2 (subunit beta, part of F(1), 3 molecules per monomer), ATP3 (subunit gamma, part of the central stalk), ATP4 (subunit b, part of the peripheral stalk), ATP5/OSCP (subunit 5/OSCP, part of the peripheral stalk), ATP6 (subunit a, part of the peripheral stalk), ATP7 (subunit d, part of the peripheral stalk), ATP8 (subunit 8, part of the peripheral stalk), OLI1 (subunit c, part of the rotor, 10 molecules per monomer), ATP14 (subunit h, part of the peripheral stalk), ATP15 (subunit epsilon, part of the central stalk), ATP16 (subunit delta, part of the central stalk), ATP17 (subunit f, part of the peripheral stalk), ATP18 (subunit i/j, part of the peripheral stalk). Dimer-specific subunits are ATP19 (subunit k, at interface between monomers), ATP20 (subunit g, at interface between monomers), TIM11 (subunit e, at interface between monomers). Also contains subunit L.

The protein localises to the mitochondrion inner membrane. Mitochondrial membrane ATP synthase (F(1)F(0) ATP synthase or Complex V) produces ATP from ADP in the presence of a proton gradient across the membrane which is generated by electron transport complexes of the respiratory chain. F-type ATP synthases consist of two structural domains, F(1) - containing the extramembraneous catalytic core, and F(0) - containing the membrane proton channel, linked together by a central stalk and a peripheral stalk. During catalysis, ATP synthesis in the catalytic domain of F(1) is coupled via a rotary mechanism of the central stalk subunits to proton translocation. Part of the complex F(0) domain. Minor subunit located with subunit a/ATP6 in the membrane. The chain is ATP synthase protein 8 from Pichia angusta (Yeast).